The sequence spans 459 residues: Glutamyl-tRNA(Gln) amidotransferase subunit A, mitochondrial (459 aa).

Residues Lys-37 and Ser-114 each act as charge relay system in the active site. Ser-138 (acyl-ester intermediate) is an active-site residue.

The protein belongs to the amidase family. GatA subfamily. Subunit of the heterotrimeric GatFAB amidotransferase (AdT) complex, composed of A, B and F subunits.

Its subcellular location is the mitochondrion. The enzyme catalyses L-glutamyl-tRNA(Gln) + L-glutamine + ATP + H2O = L-glutaminyl-tRNA(Gln) + L-glutamate + ADP + phosphate + H(+). Its function is as follows. Allows the formation of correctly charged Gln-tRNA(Gln) through the transamidation of misacylated Glu-tRNA(Gln) in the mitochondria. The reaction takes place in the presence of glutamine and ATP through an activated gamma-phospho-Glu-tRNA(Gln). This Yarrowia lipolytica (strain CLIB 122 / E 150) (Yeast) protein is Glutamyl-tRNA(Gln) amidotransferase subunit A, mitochondrial.